A 344-amino-acid polypeptide reads, in one-letter code: MIVREGSAEILVPEVYHGPGKRGTGFYNADQKINRDITIEFIKKMGIRNVLDGFGGTGIRGIRISKETDSAVTISEVSPDSYRLIRDNVERNGSQASVINDSFECVLQHGAYEYVDVDPYGSPVPYLDAALMGVKRNGFLGVTATDQSALTGSVPHKTRIRYDALIKNDTFRHEMGIRLLIGYMAKRAASLGRFIDPLISIWHGHYYRVFVRVRKGFEGAGRMMQNLGYVNKHNLLSGIYQDMDEGPVWKGNLQDNAVAEAVLASAGHKAFNPEENRLLFCDLTDIARARHTSLPDIESVIDALSSSGHAASRTMFSPTGIKTDASCDLVESLMMDTLHRRSPA.

In terms of domain architecture, Trm1 methyltransferase spans 1–334 (MIVREGSAEI…ASCDLVESLM (334 aa)). Residues Arg35, Arg60, and Glu76 each coordinate S-adenosyl-L-methionine.

Belongs to the class I-like SAM-binding methyltransferase superfamily. Trm1 family.

It catalyses the reaction guanosine(26) in tRNA + 2 S-adenosyl-L-methionine = N(2)-dimethylguanosine(26) in tRNA + 2 S-adenosyl-L-homocysteine + 2 H(+). Its function is as follows. Dimethylates a single guanine residue at position 26 of a number of tRNAs using S-adenosyl-L-methionine as donor of the methyl groups. The sequence is that of tRNA (guanine(26)-N(2))-dimethyltransferase from Thermoplasma acidophilum (strain ATCC 25905 / DSM 1728 / JCM 9062 / NBRC 15155 / AMRC-C165).